The following is a 288-amino-acid chain: Acetyl-coenzyme A carboxylase carboxyl transferase subunit beta (288 aa).

The region spanning Leu34–Gln288 is the CoA carboxyltransferase N-terminal domain. Residues Cys38, Cys41, Cys56, and Cys59 each contribute to the Zn(2+) site. The segment at Cys38–Cys59 adopts a C4-type zinc-finger fold.

This sequence belongs to the AccD/PCCB family. As to quaternary structure, acetyl-CoA carboxylase is a heterohexamer composed of biotin carboxyl carrier protein (AccB), biotin carboxylase (AccC) and two subunits each of ACCase subunit alpha (AccA) and ACCase subunit beta (AccD). Zn(2+) is required as a cofactor.

It localises to the cytoplasm. The catalysed reaction is N(6)-carboxybiotinyl-L-lysyl-[protein] + acetyl-CoA = N(6)-biotinyl-L-lysyl-[protein] + malonyl-CoA. It participates in lipid metabolism; malonyl-CoA biosynthesis; malonyl-CoA from acetyl-CoA: step 1/1. Component of the acetyl coenzyme A carboxylase (ACC) complex. Biotin carboxylase (BC) catalyzes the carboxylation of biotin on its carrier protein (BCCP) and then the CO(2) group is transferred by the transcarboxylase to acetyl-CoA to form malonyl-CoA. The polypeptide is Acetyl-coenzyme A carboxylase carboxyl transferase subunit beta (Streptococcus dysgalactiae subsp. equisimilis (strain GGS_124)).